A 356-amino-acid chain; its full sequence is Histidinol-phosphate aminotransferase (356 aa).

The residue at position 208 (Lys-208) is an N6-(pyridoxal phosphate)lysine.

This sequence belongs to the class-II pyridoxal-phosphate-dependent aminotransferase family. Histidinol-phosphate aminotransferase subfamily. As to quaternary structure, homodimer. Pyridoxal 5'-phosphate serves as cofactor.

It carries out the reaction L-histidinol phosphate + 2-oxoglutarate = 3-(imidazol-4-yl)-2-oxopropyl phosphate + L-glutamate. The protein operates within amino-acid biosynthesis; L-histidine biosynthesis; L-histidine from 5-phospho-alpha-D-ribose 1-diphosphate: step 7/9. This is Histidinol-phosphate aminotransferase from Lactococcus lactis subsp. cremoris (strain SK11).